The primary structure comprises 341 residues: ATPase GET3 (341 aa).

34 to 41 is an ATP binding site; that stretch reads KGGVGKTT. D63 is an active-site residue. ATP-binding residues include E245 and N272. Residues C283 and C286 each coordinate Zn(2+).

Belongs to the arsA ATPase family. As to quaternary structure, homodimer.

It is found in the cytoplasm. The protein localises to the endoplasmic reticulum. Functionally, ATPase required for the post-translational delivery of tail-anchored (TA) proteins to the endoplasmic reticulum. Recognizes and selectively binds the transmembrane domain of TA proteins in the cytosol. This complex then targets to the endoplasmic reticulum by membrane-bound receptors, where the tail-anchored protein is released for insertion. This process is regulated by ATP binding and hydrolysis. ATP binding drives the homodimer towards the closed dimer state, facilitating recognition of newly synthesized TA membrane proteins. ATP hydrolysis is required for insertion. Subsequently, the homodimer reverts towards the open dimer state, lowering its affinity for the membrane-bound receptor, and returning it to the cytosol to initiate a new round of targeting. The protein is ATPase GET3 of Ajellomyces capsulatus (strain H143) (Darling's disease fungus).